Reading from the N-terminus, the 700-residue chain is Putative glutamine-dependent NAD(+) synthetase (700 aa).

The region spanning 5–275 (VTIASCQLNQ…VEVISATVDV (271 aa)) is the CN hydrolase domain. Glutamate 45 (proton acceptor; for glutaminase activity) is an active-site residue. Lysine 114 functions as the For glutaminase activity in the catalytic mechanism. Cysteine 175 serves as the catalytic Nucleophile; for glutaminase activity. The tract at residues 327–700 (IPLPEEEITF…ASKFEQHQRK (374 aa)) is ligase. ATP is bound at residue 357-364 (PLSGGLDS). Serine 359 is a catalytic residue.

This sequence in the C-terminal section; belongs to the NAD synthetase family.

The catalysed reaction is deamido-NAD(+) + L-glutamine + ATP + H2O = L-glutamate + AMP + diphosphate + NAD(+) + H(+). The protein operates within cofactor biosynthesis; NAD(+) biosynthesis; NAD(+) from deamido-NAD(+) (L-Gln route): step 1/1. This is Putative glutamine-dependent NAD(+) synthetase from Schizosaccharomyces pombe (strain 972 / ATCC 24843) (Fission yeast).